Here is a 253-residue protein sequence, read N- to C-terminus: MPEARRTTIDAGEVERFSALAQEWWNPNGKFRPLHKFNPVRLAYIRDNVAAHFGRDPRAAKPFEGLRILDIGCGGGLLCEPMARLGASVVGADASATNIEVARLHALESGVSIDYRAETAEALADQGEKFDIILNMEVVEHVADIDLFIEKCAEMLKPGGLMFVATINRTLKALGLAIIGAEYVLRWLPRGTHQYGKLVRPDELERALASAGLITKDRTGVVYNPLTDRWNRSRDMDVNYMVLAEKPTAEAMI.

Positions 41, 72, 93, and 136 each coordinate S-adenosyl-L-methionine.

Belongs to the methyltransferase superfamily. UbiG/COQ3 family.

It carries out the reaction a 3-demethylubiquinol + S-adenosyl-L-methionine = a ubiquinol + S-adenosyl-L-homocysteine + H(+). It catalyses the reaction a 3-(all-trans-polyprenyl)benzene-1,2-diol + S-adenosyl-L-methionine = a 2-methoxy-6-(all-trans-polyprenyl)phenol + S-adenosyl-L-homocysteine + H(+). It participates in cofactor biosynthesis; ubiquinone biosynthesis. O-methyltransferase that catalyzes the 2 O-methylation steps in the ubiquinone biosynthetic pathway. This is Ubiquinone biosynthesis O-methyltransferase from Chelativorans sp. (strain BNC1).